A 276-amino-acid chain; its full sequence is Pantothenate synthetase (276 aa).

27-34 (MGALHRGH) is a binding site for ATP. H34 (proton donor) is an active-site residue. Q58 is a (R)-pantoate binding site. Q58 is a binding site for beta-alanine. 147–150 (GKKD) provides a ligand contact to ATP. Q153 is a (R)-pantoate binding site. Residues A176 and 184–187 (LSSR) contribute to the ATP site.

Belongs to the pantothenate synthetase family. As to quaternary structure, homodimer.

It is found in the cytoplasm. The catalysed reaction is (R)-pantoate + beta-alanine + ATP = (R)-pantothenate + AMP + diphosphate + H(+). It functions in the pathway cofactor biosynthesis; (R)-pantothenate biosynthesis; (R)-pantothenate from (R)-pantoate and beta-alanine: step 1/1. Catalyzes the condensation of pantoate with beta-alanine in an ATP-dependent reaction via a pantoyl-adenylate intermediate. This Helicobacter pylori (strain P12) protein is Pantothenate synthetase.